Consider the following 296-residue polypeptide: Probable lipid kinase YegS-like (296 aa).

The 130-residue stretch at 1-130 (MPHTLLILNG…IDLAQVNDKH (130 aa)) folds into the DAGKc domain. Residues Thr-37, 63-69 (GDGTINE), and Thr-92 each bind ATP. The Mg(2+) site is built by Leu-212, Asp-215, and Leu-217. Glu-268 acts as the Proton acceptor in catalysis.

Belongs to the diacylglycerol/lipid kinase family. YegS lipid kinase subfamily. Mg(2+) is required as a cofactor. It depends on Ca(2+) as a cofactor.

The protein resides in the cytoplasm. In terms of biological role, probably phosphorylates lipids; the in vivo substrate is unknown. The chain is Probable lipid kinase YegS-like from Yersinia enterocolitica serotype O:8 / biotype 1B (strain NCTC 13174 / 8081).